The sequence spans 378 residues: Queuine tRNA-ribosyltransferase (378 aa).

Residue Asp-91 is the Proton acceptor of the active site. Residues 91 to 95 (DSGGF), Asp-145, Gln-189, and Gly-216 each bind substrate. The interval 247–253 (GVGKPED) is RNA binding. Asp-266 functions as the Nucleophile in the catalytic mechanism. The interval 271-275 (TRNAR) is RNA binding; important for wobble base 34 recognition. Positions 304, 306, 309, and 335 each coordinate Zn(2+).

The protein belongs to the queuine tRNA-ribosyltransferase family. In terms of assembly, homodimer. Within each dimer, one monomer is responsible for RNA recognition and catalysis, while the other monomer binds to the replacement base PreQ1. It depends on Zn(2+) as a cofactor.

It catalyses the reaction 7-aminomethyl-7-carbaguanine + guanosine(34) in tRNA = 7-aminomethyl-7-carbaguanosine(34) in tRNA + guanine. It functions in the pathway tRNA modification; tRNA-queuosine biosynthesis. In terms of biological role, catalyzes the base-exchange of a guanine (G) residue with the queuine precursor 7-aminomethyl-7-deazaguanine (PreQ1) at position 34 (anticodon wobble position) in tRNAs with GU(N) anticodons (tRNA-Asp, -Asn, -His and -Tyr). Catalysis occurs through a double-displacement mechanism. The nucleophile active site attacks the C1' of nucleotide 34 to detach the guanine base from the RNA, forming a covalent enzyme-RNA intermediate. The proton acceptor active site deprotonates the incoming PreQ1, allowing a nucleophilic attack on the C1' of the ribose to form the product. After dissociation, two additional enzymatic reactions on the tRNA convert PreQ1 to queuine (Q), resulting in the hypermodified nucleoside queuosine (7-(((4,5-cis-dihydroxy-2-cyclopenten-1-yl)amino)methyl)-7-deazaguanosine). The protein is Queuine tRNA-ribosyltransferase of Vibrio vulnificus (strain CMCP6).